Reading from the N-terminus, the 344-residue chain is L-threonine 3-dehydrogenase (344 aa).

Cys38 provides a ligand contact to Zn(2+). Active-site charge relay system residues include Thr40 and His43. His63, Glu64, Cys93, Cys96, Cys99, and Cys107 together coordinate Zn(2+). Residues Ile175, Asp195, Arg200, 263–265 (LGI), and 287–288 (IY) contribute to the NAD(+) site.

The protein belongs to the zinc-containing alcohol dehydrogenase family. Homotetramer. Zn(2+) is required as a cofactor.

It localises to the cytoplasm. The catalysed reaction is L-threonine + NAD(+) = (2S)-2-amino-3-oxobutanoate + NADH + H(+). It participates in amino-acid degradation; L-threonine degradation via oxydo-reductase pathway; glycine from L-threonine: step 1/2. Functionally, catalyzes the NAD(+)-dependent oxidation of L-threonine to 2-amino-3-ketobutyrate. The sequence is that of L-threonine 3-dehydrogenase from Deinococcus deserti (strain DSM 17065 / CIP 109153 / LMG 22923 / VCD115).